Reading from the N-terminus, the 185-residue chain is Pyruvate/ketoisovalerate oxidoreductases common subunit gamma (185 aa).

Heterotetramer of one alpha, one beta, one delta and one gamma chain.

The enzyme catalyses 2 oxidized [2Fe-2S]-[ferredoxin] + pyruvate + CoA = 2 reduced [2Fe-2S]-[ferredoxin] + acetyl-CoA + CO2 + H(+). It carries out the reaction 3-methyl-2-oxobutanoate + 2 oxidized [2Fe-2S]-[ferredoxin] + CoA = 2-methylpropanoyl-CoA + 2 reduced [2Fe-2S]-[ferredoxin] + CO2 + H(+). This chain is Pyruvate/ketoisovalerate oxidoreductases common subunit gamma (porG), found in Thermococcus kodakarensis (strain ATCC BAA-918 / JCM 12380 / KOD1) (Pyrococcus kodakaraensis (strain KOD1)).